A 718-amino-acid polypeptide reads, in one-letter code: MFGKKKKKIEISGPSNFEHRVHTGFDPQEQKFTGLPQQWHSLLADTANRPKPMVDPSCITPIQLAPMKTIVRGNKSCKESSINGLLEDFDNISVTRSNSLRKESPPTPDQGAASRIQGHSEENGFITFSQYSSESDTTTDYTTEKYRDRSLYGDDLDLYYRGSHAAKQNGHAMKMKHGDAYYPEMKPLKSDLARFPVDYHTHLDSLSKASEYGDLKWDYQRASSSSPLDYSFQLTPSRTAGTSRCSKESLAYSESDWGPSFDDYDRRPKSSYLHQTSPQPAMRQRSKSGSGLQEPMMPFGASAFKTHPQGHSYNSYTYPRLSEPTMCIPKVDYDRAQMVFSPPLSGSDTYPRGPTKLPQSQSKVGYSSSSHQYPGYHKASLYHHPSLQTSSQYISTASYLSSLSISSSTYPPPSWGSSSDQQPSRVSHEQFRAALQLVVSPGDPREYLDNFIKIGEGSTGIVCIATEKHTGKQVAVKKMDLRKQQRRELLFNEVVIMRDYHHDNVVDMYNSYLVGDELWVVMEFLEGGALTDIVTHTRMNEEQIATVCLSVLKALSYLHNQGVIHRDIKSDSILLTSDGRIKLSDFGFCAQVSKEVPKRKSLVGTPYWMAPEVISRLPYGTEVDIWSLGIMVIEMIDGEPPYFNEPPLQAMRRIRDSLPPRVKDLHKVSSMLRGFLDLMLVREPSQRATAQELLGHPFLKLAGPPSCIVPLMRQYRHH.

5 disordered regions span residues 1-29 (MFGKKKKKIEISGPSNFEHRVHTGFDPQE), 96-119 (RSNSLRKESPPTPDQGAASRIQGH), 226-245 (SPLDYSFQLTPSRTAGTSRC), 264-296 (YDRRPKSSYLHQTSPQPAMRQRSKSGSGLQEPM), and 339-371 (VFSPPLSGSDTYPRGPTKLPQSQSKVGYSSSSH). A CRIB domain is found at 11–24 (ISGPSNFEHRVHTG). The interval 25-447 (FDPQEQKFTG…VVSPGDPREY (423 aa)) is linker. Position 104 is a phosphoserine (Ser-104). The residue at position 107 (Thr-107) is a Phosphothreonine. Polar residues predominate over residues 226-244 (SPLDYSFQLTPSRTAGTSR). The segment covering 359 to 371 (QSQSKVGYSSSSH) has biased composition (low complexity). One can recognise a Protein kinase domain in the interval 448 to 699 (LDNFIKIGEG…AQELLGHPFL (252 aa)). ATP-binding positions include 454 to 462 (IGEGSTGIV) and Lys-477. The active-site Proton acceptor is Asp-567.

This sequence belongs to the protein kinase superfamily. STE Ser/Thr protein kinase family. STE20 subfamily. In terms of assembly, interacts tightly with GTP-bound but not GDP-bound CDC42/p21 and RAC1. Interacts with MARK2, leading to inhibit MARK2 independently of kinase activity. Interacts with RHOD and RHOH. Autophosphorylated when activated by CDC42/p21.

The protein localises to the mitochondrion. It is found in the cytoplasm. The protein resides in the nucleus. It catalyses the reaction L-seryl-[protein] + ATP = O-phospho-L-seryl-[protein] + ADP + H(+). It carries out the reaction L-threonyl-[protein] + ATP = O-phospho-L-threonyl-[protein] + ADP + H(+). In terms of biological role, serine/threonine protein kinase that plays a role in a variety of different signaling pathways including cytoskeleton regulation, cell migration, proliferation or cell survival. Activation by various effectors including growth factor receptors or active CDC42 and RAC1 results in a conformational change and a subsequent autophosphorylation on several serine and/or threonine residues. Phosphorylates the proto-oncogene RAF and stimulates its kinase activity. Promotes cell survival by phosphorylating the BCL2 antagonist of cell death BAD. Phosphorylates CTNND1, probably to regulate cytoskeletal organization and cell morphology. Keeps microtubules stable through MARK2 inhibition and destabilizes the F-actin network leading to the disappearance of stress fibers and focal adhesions. The protein is Serine/threonine-protein kinase PAK 5 (Pak5) of Rattus norvegicus (Rat).